Here is a 434-residue protein sequence, read N- to C-terminus: Methylenetetrahydrofolate--tRNA-(uracil-5-)-methyltransferase TrmFO (434 aa).

Position 10–15 (10–15 (GAGLAG)) interacts with FAD.

Belongs to the MnmG family. TrmFO subfamily. FAD serves as cofactor.

Its subcellular location is the cytoplasm. It carries out the reaction uridine(54) in tRNA + (6R)-5,10-methylene-5,6,7,8-tetrahydrofolate + NADH + H(+) = 5-methyluridine(54) in tRNA + (6S)-5,6,7,8-tetrahydrofolate + NAD(+). The catalysed reaction is uridine(54) in tRNA + (6R)-5,10-methylene-5,6,7,8-tetrahydrofolate + NADPH + H(+) = 5-methyluridine(54) in tRNA + (6S)-5,6,7,8-tetrahydrofolate + NADP(+). Catalyzes the folate-dependent formation of 5-methyl-uridine at position 54 (M-5-U54) in all tRNAs. The protein is Methylenetetrahydrofolate--tRNA-(uracil-5-)-methyltransferase TrmFO of Bacillus cytotoxicus (strain DSM 22905 / CIP 110041 / 391-98 / NVH 391-98).